Consider the following 626-residue polypeptide: Hormonally up-regulated neu tumor-associated kinase homolog B (626 aa).

ATP contacts are provided by residues 1–2 (KV) and lysine 17. A Protein kinase domain is found at 1–246 (KVREGLHVGT…IQQALANRWL (246 aa)). Aspartate 112 acts as the Proton acceptor in catalysis. A compositionally biased stretch (basic and acidic residues) spans 336–357 (KYKMNKNSYEERRSKDLEKRGE). Disordered stretches follow at residues 336–407 (KYKM…ESFG), 477–574 (VNRE…RSRG), and 590–615 (QVVS…PGYA). A compositionally biased stretch (polar residues) spans 374 to 390 (SHRQSTCLTPQGHSSSK). Residues 392-405 (PIKERRSSKSERES) are compositionally biased toward basic and acidic residues. Residues 518–532 (DNTSPLKGHSNQASF) are compositionally biased toward polar residues. Positions 539-555 (SPSSPESMSPTSPHSPS) are enriched in low complexity. Polar residues predominate over residues 556–566 (CNNNISGNLGS).

The protein belongs to the protein kinase superfamily. CAMK Ser/Thr protein kinase family. SNF1 subfamily. In terms of tissue distribution, in the egg, expressed predominantly in the animal hemisphere. This pattern of expression persists throughout the cleavage and blastula stages. At the gastrula stage, expression is restricted to the ectoderm. In later-stage embryos, expressed over the entire embryonic surface including the open neural plate at stage 15 and the neural tube at stage 22. In tadpoles, strongly expressed in the neural tube, motor neurons, brain regions and sensory organs (otic vesicle and eye). Also expressed in the perisomitic mesoderm, brachial arches and embryonic epidermis of tadpoles.

It carries out the reaction L-seryl-[protein] + ATP = O-phospho-L-seryl-[protein] + ADP + H(+). It catalyses the reaction L-threonyl-[protein] + ATP = O-phospho-L-threonyl-[protein] + ADP + H(+). This Xenopus laevis (African clawed frog) protein is Hormonally up-regulated neu tumor-associated kinase homolog B (hunk-b).